We begin with the raw amino-acid sequence, 318 residues long: Protoheme IX farnesyltransferase (318 aa).

A run of 9 helical transmembrane segments spans residues 37–57 (LVIF…HPVI), 58–78 (AFTA…LNMW), 100–120 (VTAR…VMTM), 122–142 (VLVN…YLVV), 155–175 (IVIG…AVTG), 182–202 (FVLF…LALY), 228–248 (IMLY…LGFA), 251–271 (LYMG…FGIW), and 291–311 (ILYL…GLGG).

The protein belongs to the UbiA prenyltransferase family. Protoheme IX farnesyltransferase subfamily.

The protein resides in the cell inner membrane. It carries out the reaction heme b + (2E,6E)-farnesyl diphosphate + H2O = Fe(II)-heme o + diphosphate. Its pathway is porphyrin-containing compound metabolism; heme O biosynthesis; heme O from protoheme: step 1/1. In terms of biological role, converts heme B (protoheme IX) to heme O by substitution of the vinyl group on carbon 2 of heme B porphyrin ring with a hydroxyethyl farnesyl side group. The protein is Protoheme IX farnesyltransferase of Parvibaculum lavamentivorans (strain DS-1 / DSM 13023 / NCIMB 13966).